Here is a 654-residue protein sequence, read N- to C-terminus: Cysteine-rich receptor-like protein kinase 40 (654 aa).

The N-terminal stretch at 1 to 27 is a signal peptide; the sequence is MGKCSALMIFLSSSLLLVLQTLHVVNA. Gnk2-homologous domains are found at residues 28–131 and 143–250; these read VKCF…NQST and WPSP…LYSF. The Extracellular segment spans residues 28-287; the sequence is VKCFGNSFNG…VKKGKSIGYG (260 aa). Residues N38, N65, N128, N154, N167, and N256 are each glycosylated (N-linked (GlcNAc...) asparagine). Residues 288–308 form a helical membrane-spanning segment; that stretch reads GIIAIVVVFTFINLLVFIGFI. Residues 309 to 654 are Cytoplasmic-facing; it reads KVYARRGKLN…DDVFTELSCR (346 aa). The Protein kinase domain maps to 348 to 619; it reads FSSENTLGQG…VIIWLGSETI (272 aa). ATP-binding positions include 354 to 362 and K376; that span reads LGQGGFGTV. Y421 carries the post-translational modification Phosphotyrosine. D473 serves as the catalytic Proton acceptor. S477 bears the Phosphoserine mark. T513 is modified (phosphothreonine). Position 521 is a phosphotyrosine (Y521).

Belongs to the protein kinase superfamily. Ser/Thr protein kinase family. CRK subfamily.

The protein resides in the membrane. It carries out the reaction L-seryl-[protein] + ATP = O-phospho-L-seryl-[protein] + ADP + H(+). The catalysed reaction is L-threonyl-[protein] + ATP = O-phospho-L-threonyl-[protein] + ADP + H(+). The sequence is that of Cysteine-rich receptor-like protein kinase 40 (CRK40) from Arabidopsis thaliana (Mouse-ear cress).